An 82-amino-acid polypeptide reads, in one-letter code: MGFYMLLTVALLLTSLMNVEATPVNQAERSALEKSGLGNRIQPRYDNCGDAEADCYQSKCMDEETYDEECEASCNYVVANCI.

A signal peptide spans 1–21 (MGFYMLLTVALLLTSLMNVEA). A propeptide spanning residues 22–39 (TPVNQAERSALEKSGLGN) is cleaved from the precursor. Intrachain disulfides connect cysteine 48/cysteine 70, cysteine 55/cysteine 74, and cysteine 60/cysteine 81.

Expressed by the venom duct.

Its subcellular location is the secreted. The polypeptide is Turripeptide IX-07 (Gemmula speciosa (Splendid gem-turris)).